The following is a 289-amino-acid chain: Pyridoxal kinase PdxY (289 aa).

Residues S9 and 44-45 (TQ) contribute to the substrate site. Residues D112, V144, E149, and K182 each coordinate ATP. Substrate is bound at residue D221.

It belongs to the pyridoxine kinase family. PdxY subfamily. In terms of assembly, homodimer. The cofactor is Mg(2+).

The enzyme catalyses pyridoxal + ATP = pyridoxal 5'-phosphate + ADP + H(+). It participates in cofactor metabolism; pyridoxal 5'-phosphate salvage; pyridoxal 5'-phosphate from pyridoxal: step 1/1. In terms of biological role, pyridoxal kinase involved in the salvage pathway of pyridoxal 5'-phosphate (PLP). Catalyzes the phosphorylation of pyridoxal to PLP. The polypeptide is Pyridoxal kinase PdxY (Vibrio parahaemolyticus serotype O3:K6 (strain RIMD 2210633)).